A 412-amino-acid polypeptide reads, in one-letter code: Short-chain specific acyl-CoA dehydrogenase, mitochondrial (412 aa).

Residues 1 to 24 (MAAALLARASGPARRALCPRAWRQ) constitute a mitochondrion transit peptide. T27 carries the post-translational modification Phosphothreonine. K51 is subject to N6-acetyllysine; alternate. Residue K51 is modified to N6-succinyllysine; alternate. K72 carries the post-translational modification N6-acetyllysine. K129 bears the N6-acetyllysine; alternate mark. An N6-succinyllysine; alternate modification is found at K129. Residues 152–161 (FALSEPGNGS) and 185–187 (WIT) contribute to the FAD site. A substrate-binding site is contributed by S161. K208 is modified (N6-acetyllysine). Residue K262 is modified to N6-acetyllysine; alternate. K262 is subject to N6-succinyllysine; alternate. Substrate is bound at residue 269-272 (DMGR). R297 lines the FAD pocket. Position 306 is an N6-acetyllysine; alternate (K306). An N6-succinyllysine; alternate modification is found at K306. Residues Q308 and 365-369 (QILGG) each bind FAD. The active-site Proton acceptor is the E392. G393 is a binding site for substrate. 394–396 (TSE) contributes to the FAD binding site.

This sequence belongs to the acyl-CoA dehydrogenase family. In terms of assembly, homotetramer. FAD serves as cofactor.

The protein resides in the mitochondrion matrix. It carries out the reaction a short-chain 2,3-saturated fatty acyl-CoA + oxidized [electron-transfer flavoprotein] + H(+) = a short-chain (2E)-enoyl-CoA + reduced [electron-transfer flavoprotein]. The enzyme catalyses butanoyl-CoA + oxidized [electron-transfer flavoprotein] + H(+) = (2E)-butenoyl-CoA + reduced [electron-transfer flavoprotein]. It catalyses the reaction pentanoyl-CoA + oxidized [electron-transfer flavoprotein] + H(+) = (2E)-pentenoyl-CoA + reduced [electron-transfer flavoprotein]. The catalysed reaction is hexanoyl-CoA + oxidized [electron-transfer flavoprotein] + H(+) = (2E)-hexenoyl-CoA + reduced [electron-transfer flavoprotein]. It functions in the pathway lipid metabolism; mitochondrial fatty acid beta-oxidation. Functionally, short-chain specific acyl-CoA dehydrogenase is one of the acyl-CoA dehydrogenases that catalyze the first step of mitochondrial fatty acid beta-oxidation, an aerobic process breaking down fatty acids into acetyl-CoA and allowing the production of energy from fats. The first step of fatty acid beta-oxidation consists in the removal of one hydrogen from C-2 and C-3 of the straight-chain fatty acyl-CoA thioester, resulting in the formation of trans-2-enoyl-CoA. Among the different mitochondrial acyl-CoA dehydrogenases, short-chain specific acyl-CoA dehydrogenase acts specifically on acyl-CoAs with saturated 4 to 6 carbons long primary chains. The chain is Short-chain specific acyl-CoA dehydrogenase, mitochondrial (ACADS) from Homo sapiens (Human).